The chain runs to 101 residues: uncharacterized protein (101 aa).

This is an uncharacterized protein from Bacillus subtilis (strain 168).